Reading from the N-terminus, the 646-residue chain is MSPPQTTLPVTEAGLVPLLQPYGPYVLVRKLAEGGMAEIFLAKLLGADGFERNVVIKRMLPHLTNNPDFVEMFRDEARLAAKLAHPNIVQIQELGFAEGCYYICMEYLAGEDFSTTLRLAGRKRHYVPLPVVLRVLIDAARGLHFAHEFTNEAGQPLNVVHRDISPSNLYLTYQGQVKVLDFGIAKAESRLVNTRTGVVKGKYMYMAPEQARGKEVDRRADIFALGVSLYEALTHVRPFSRENDLAVLNALLQGELKPPRELRPDLPEELEAILLKAMAFKPEDRYPTAEAFADALETFLSEHLSGSGAMPLGAFLKGHFGEERFTERSRIPTLATLTATYGGAAAGAQGQAPGAEPHGTNLYGVLAREGDATSAQRPGMSMRPSSPGVPAHGAASRGSTSPESAPTAGGRRWRTLAVGLAGGLMLAAAGIVGYRQWMTTPASVSLVPATVPVVEAVAPEAAAAQVGAPMEAVAPVGAAAQAGSLTDAVANGAGGDVGETDSAQLSVDAAGVTETDEAGLAGAASDVEAEADEEGADAAPVRSKKASSQKRVTLGIDDVQRVVSRGRARITTCFERYKADLPSSQGEVQVQLTIVSSGKVRAGTRGPLASSGVGRCLEAQAERLRFPPHRDQEVTVVMPFSWRVTQ.

Over 1 to 415 (MSPPQTTLPV…PTAGGRRWRT (415 aa)) the chain is Periplasmic. The Protein kinase domain occupies 25–300 (YVLVRKLAEG…AFADALETFL (276 aa)). ATP is bound by residues 31-39 (LAEGGMAEI) and Lys57. The active-site Proton acceptor is the Asp163. The interval 373–410 (TSAQRPGMSMRPSSPGVPAHGAASRGSTSPESAPTAGG) is disordered. The chain crosses the membrane as a helical span at residues 416 to 433 (LAVGLAGGLMLAAAGIVG). The Cytoplasmic segment spans residues 434–646 (YRQWMTTPAS…VMPFSWRVTQ (213 aa)). The disordered stretch occupies residues 521 to 547 (AGAASDVEAEADEEGADAAPVRSKKAS). The span at 527 to 536 (VEAEADEEGA) shows a compositional bias: acidic residues.

It belongs to the protein kinase superfamily. Tyr protein kinase family. As to quaternary structure, interacts with MglA. Post-translationally, autophosphorylated.

The protein resides in the cell inner membrane. The catalysed reaction is L-tyrosyl-[protein] + ATP = O-phospho-L-tyrosyl-[protein] + ADP + H(+). Functionally, essential for growth. Interacts with MglA to control social gliding motility. The sequence is that of Tyrosine-protein kinase MasK (masK) from Myxococcus xanthus (strain DK1622).